A 448-amino-acid chain; its full sequence is UDP-N-acetylmuramoylalanine--D-glutamate ligase (448 aa).

112–118 (GSNAKST) contacts ATP.

Belongs to the MurCDEF family.

It is found in the cytoplasm. The catalysed reaction is UDP-N-acetyl-alpha-D-muramoyl-L-alanine + D-glutamate + ATP = UDP-N-acetyl-alpha-D-muramoyl-L-alanyl-D-glutamate + ADP + phosphate + H(+). It participates in cell wall biogenesis; peptidoglycan biosynthesis. Functionally, cell wall formation. Catalyzes the addition of glutamate to the nucleotide precursor UDP-N-acetylmuramoyl-L-alanine (UMA). The polypeptide is UDP-N-acetylmuramoylalanine--D-glutamate ligase (Acinetobacter baylyi (strain ATCC 33305 / BD413 / ADP1)).